Consider the following 103-residue polypeptide: MYAVIQSGGKQHRVVEGETLKVELLKAESGATITFDDVLMVVNGDNIQIGAPVVAGAKVTAEVIGHGRHDKIRIIKMRRRKHYRKQQGHRQWFTELKITGISG.

The protein belongs to the bacterial ribosomal protein bL21 family. In terms of assembly, part of the 50S ribosomal subunit. Contacts protein L20.

Its function is as follows. This protein binds to 23S rRNA in the presence of protein L20. In Acinetobacter baumannii (strain AB307-0294), this protein is Large ribosomal subunit protein bL21.